We begin with the raw amino-acid sequence, 162 residues long: uncharacterized protein (162 aa).

The region spanning 6 to 71 is the HTH asnC-type domain; it reads LDDLDRAILK…PIKPRKLALV (66 aa). A DNA-binding region (H-T-H motif) is located at residues 25–44; that stretch reads IAEISNQLKKPESTVHFRIK.

This is an uncharacterized protein from Pyrococcus abyssi (strain GE5 / Orsay).